The sequence spans 284 residues: Nucleotide-binding protein NMB0738 (284 aa).

8–15 (GLSGSGKS) lines the ATP pocket. A GTP-binding site is contributed by 58–61 (DVRS).

The protein belongs to the RapZ-like family.

Displays ATPase and GTPase activities. The chain is Nucleotide-binding protein NMB0738 from Neisseria meningitidis serogroup B (strain ATCC BAA-335 / MC58).